Here is a 432-residue protein sequence, read N- to C-terminus: Enolase (432 aa).

The interval glutamine 41 to tyrosine 64 is disordered. Residues glutamate 52–tyrosine 64 are compositionally biased toward basic and acidic residues. Position 168 (glutamine 168) interacts with (2R)-2-phosphoglycerate. Glutamate 211 (proton donor) is an active-site residue. 3 residues coordinate Mg(2+): aspartate 248, glutamate 289, and aspartate 316. 4 residues coordinate (2R)-2-phosphoglycerate: lysine 341, arginine 370, serine 371, and lysine 392. Lysine 341 serves as the catalytic Proton acceptor.

This sequence belongs to the enolase family. It depends on Mg(2+) as a cofactor.

The protein resides in the cytoplasm. It is found in the secreted. Its subcellular location is the cell surface. The catalysed reaction is (2R)-2-phosphoglycerate = phosphoenolpyruvate + H2O. Its pathway is carbohydrate degradation; glycolysis; pyruvate from D-glyceraldehyde 3-phosphate: step 4/5. In terms of biological role, catalyzes the reversible conversion of 2-phosphoglycerate (2-PG) into phosphoenolpyruvate (PEP). It is essential for the degradation of carbohydrates via glycolysis. The protein is Enolase of Synechocystis sp. (strain ATCC 27184 / PCC 6803 / Kazusa).